Consider the following 248-residue polypeptide: Adenosylcobinamide-GDP ribazoletransferase (248 aa).

Transmembrane regions (helical) follow at residues 36 to 56 (FFLP…YLGL), 59 to 79 (FLPP…ITGG), 113 to 133 (FGTI…YSLV), 137 to 157 (CSIA…FLCL), 170 to 190 (IFIG…ALAM), and 199 to 219 (ITII…LLCL).

Belongs to the CobS family. Mg(2+) is required as a cofactor.

It is found in the cell membrane. The catalysed reaction is alpha-ribazole + adenosylcob(III)inamide-GDP = adenosylcob(III)alamin + GMP + H(+). It catalyses the reaction alpha-ribazole 5'-phosphate + adenosylcob(III)inamide-GDP = adenosylcob(III)alamin 5'-phosphate + GMP + H(+). The protein operates within cofactor biosynthesis; adenosylcobalamin biosynthesis; adenosylcobalamin from cob(II)yrinate a,c-diamide: step 7/7. Its function is as follows. Joins adenosylcobinamide-GDP and alpha-ribazole to generate adenosylcobalamin (Ado-cobalamin). Also synthesizes adenosylcobalamin 5'-phosphate from adenosylcobinamide-GDP and alpha-ribazole 5'-phosphate. The chain is Adenosylcobinamide-GDP ribazoletransferase from Clostridium botulinum (strain 657 / Type Ba4).